The chain runs to 106 residues: ATP-dependent Clp protease adapter protein ClpS (106 aa).

It belongs to the ClpS family. In terms of assembly, binds to the N-terminal domain of the chaperone ClpA.

Functionally, involved in the modulation of the specificity of the ClpAP-mediated ATP-dependent protein degradation. The chain is ATP-dependent Clp protease adapter protein ClpS from Yersinia pestis bv. Antiqua (strain Antiqua).